Here is a 125-residue protein sequence, read N- to C-terminus: Small ribosomal subunit protein uS12 (125 aa).

The tract at residues 1–28 (MPTINQLVRKGREKVKKKSKAPALEGNP) is disordered. The segment covering 9–20 (RKGREKVKKKSK) has biased composition (basic residues). Residue D89 is modified to 3-methylthioaspartic acid. The interval 104 to 125 (AAGVKDRKQSRSKYGTKRPKEK) is disordered. The segment covering 113–125 (SRSKYGTKRPKEK) has biased composition (basic residues).

This sequence belongs to the universal ribosomal protein uS12 family. As to quaternary structure, part of the 30S ribosomal subunit. Contacts proteins S8 and S17. May interact with IF1 in the 30S initiation complex.

In terms of biological role, with S4 and S5 plays an important role in translational accuracy. Its function is as follows. Interacts with and stabilizes bases of the 16S rRNA that are involved in tRNA selection in the A site and with the mRNA backbone. Located at the interface of the 30S and 50S subunits, it traverses the body of the 30S subunit contacting proteins on the other side and probably holding the rRNA structure together. The combined cluster of proteins S8, S12 and S17 appears to hold together the shoulder and platform of the 30S subunit. This chain is Small ribosomal subunit protein uS12, found in Persephonella marina (strain DSM 14350 / EX-H1).